The chain runs to 292 residues: 33 kDa chaperonin (292 aa).

2 cysteine pairs are disulfide-bonded: Cys238-Cys240 and Cys271-Cys274.

Belongs to the HSP33 family. In terms of processing, under oxidizing conditions two disulfide bonds are formed involving the reactive cysteines. Under reducing conditions zinc is bound to the reactive cysteines and the protein is inactive.

It is found in the cytoplasm. Functionally, redox regulated molecular chaperone. Protects both thermally unfolding and oxidatively damaged proteins from irreversible aggregation. Plays an important role in the bacterial defense system toward oxidative stress. This Latilactobacillus sakei subsp. sakei (strain 23K) (Lactobacillus sakei subsp. sakei) protein is 33 kDa chaperonin.